The sequence spans 684 residues: ATP-dependent DNA helicase RecG (684 aa).

The tract at residues 51–148 (RHIASMATLQ…ADVPQFQAPH (98 aa)) is wedge domain. A Helicase ATP-binding domain is found at 278–439 (DLARHRPMRR…VHADLEVSVI (162 aa)). Position 291-298 (291-298 (GDVGSGKT)) interacts with ATP. Residues 392–395 (DEQH) carry the DEAH box motif.

Belongs to the helicase family. RecG subfamily. Monomer.

It carries out the reaction Couples ATP hydrolysis with the unwinding of duplex DNA by translocating in the 3'-5' direction.. It catalyses the reaction ATP + H2O = ADP + phosphate + H(+). Its function is as follows. Plays a critical role in recombination and DNA repair. Helps process Holliday junction intermediates to mature products by catalyzing branch migration. Has replication fork regression activity, unwinds stalled or blocked replication forks to make a HJ that can be resolved. Has a DNA unwinding activity characteristic of a DNA helicase with 3'-5' polarity. The protein is ATP-dependent DNA helicase RecG of Acidithiobacillus ferridurans.